Here is a 72-residue protein sequence, read N- to C-terminus: Large ribosomal subunit protein bL31 (72 aa).

Zn(2+) contacts are provided by Cys-16, Cys-18, Cys-38, and Cys-41.

The protein belongs to the bacterial ribosomal protein bL31 family. Type A subfamily. Part of the 50S ribosomal subunit. It depends on Zn(2+) as a cofactor.

Functionally, binds the 23S rRNA. The protein is Large ribosomal subunit protein bL31 of Vibrio campbellii (strain ATCC BAA-1116).